A 122-amino-acid chain; its full sequence is Large ribosomal subunit protein uL14c (122 aa).

The protein belongs to the universal ribosomal protein uL14 family. As to quaternary structure, part of the 50S ribosomal subunit.

The protein resides in the plastid. The protein localises to the chloroplast. Binds to 23S rRNA. The polypeptide is Large ribosomal subunit protein uL14c (Cucumis sativus (Cucumber)).